The primary structure comprises 173 residues: Co-chaperone protein HscB homolog (173 aa).

The J domain maps to 3-75 (NPFALFDLPI…ILRADCIIAL (73 aa)).

This sequence belongs to the HscB family. Interacts with HscA and stimulates its ATPase activity.

In terms of biological role, co-chaperone involved in the maturation of iron-sulfur cluster-containing proteins. Seems to help targeting proteins to be folded toward HscA. The sequence is that of Co-chaperone protein HscB homolog from Mannheimia succiniciproducens (strain KCTC 0769BP / MBEL55E).